Here is a 176-residue protein sequence, read N- to C-terminus: Ribosome maturation factor RimM (176 aa).

Residues 93 to 172 (EGEFFYFDVL…EILTKDAKSI (80 aa)) enclose the PRC barrel domain.

This sequence belongs to the RimM family. As to quaternary structure, binds ribosomal protein uS19.

The protein localises to the cytoplasm. Its function is as follows. An accessory protein needed during the final step in the assembly of 30S ribosomal subunit, possibly for assembly of the head region. Essential for efficient processing of 16S rRNA. May be needed both before and after RbfA during the maturation of 16S rRNA. It has affinity for free ribosomal 30S subunits but not for 70S ribosomes. The sequence is that of Ribosome maturation factor RimM from Campylobacter curvus (strain 525.92).